The sequence spans 828 residues: Periplasmic nitrate reductase (828 aa).

The tat-type signal signal peptide spans 1–31 (MKLSRRSFMKANAVAAAAAAAGLSVPGVARA). Residues 39-95 (IKWDKAPCRFCGTGCGVLVGTQQGRVVACQGDPDAPVNRGLNCIKGYFLPKIMYGKD) enclose the 4Fe-4S Mo/W bis-MGD-type domain. Cys46, Cys49, Cys53, and Cys81 together coordinate [4Fe-4S] cluster. Residues Lys83, Gln150, Asn175, Cys179, 212 to 219 (WGSNMAEM), 243 to 247 (STYQH), 262 to 264 (QSD), Met372, Gln376, Asn482, 508 to 509 (SD), Lys531, Asp558, and 718 to 727 (TGRVLEHWHT) each bind Mo-bis(molybdopterin guanine dinucleotide). Phe794 contributes to the substrate binding site. The Mo-bis(molybdopterin guanine dinucleotide) site is built by Asn802 and Lys819.

It belongs to the prokaryotic molybdopterin-containing oxidoreductase family. NasA/NapA/NarB subfamily. As to quaternary structure, component of the periplasmic nitrate reductase NapAB complex composed of NapA and NapB. The cofactor is [4Fe-4S] cluster. Requires Mo-bis(molybdopterin guanine dinucleotide) as cofactor. Post-translationally, predicted to be exported by the Tat system. The position of the signal peptide cleavage has not been experimentally proven.

The protein localises to the periplasm. The enzyme catalyses 2 Fe(II)-[cytochrome] + nitrate + 2 H(+) = 2 Fe(III)-[cytochrome] + nitrite + H2O. In terms of biological role, catalytic subunit of the periplasmic nitrate reductase complex NapAB. Receives electrons from NapB and catalyzes the reduction of nitrate to nitrite. This chain is Periplasmic nitrate reductase, found in Escherichia coli O1:K1 / APEC.